We begin with the raw amino-acid sequence, 794 residues long: Copper-exporting P-type ATPase (794 aa).

2 HMA domains span residues 4–69 (TTLT…YDVA) and 71–137 (EQVE…YDAE). Cu(+) contacts are provided by Cys-15, Cys-18, Cys-82, and Cys-85. A run of 6 helical transmembrane segments spans residues 161–181 (IISA…ISPI), 186–206 (ILVN…IIGW), 225–245 (VLVA…MMMW), 255–275 (LYFE…YLEA), 410–430 (YFVP…IIFV), and 437–457 (PALV…LGLA). Asp-494 acts as the 4-aspartylphosphate intermediate in catalysis. Residues Asp-689 and Asp-693 each contribute to the Mg(2+) site. A run of 2 helical transmembrane segments spans residues 747 to 767 (LFWA…GLLA) and 773 to 789 (AAMA…ALRL).

It belongs to the cation transport ATPase (P-type) (TC 3.A.3) family. Type IB subfamily.

The protein resides in the cell membrane. The enzyme catalyses Cu(+)(in) + ATP + H2O = Cu(+)(out) + ADP + phosphate + H(+). Involved in copper export. This chain is Copper-exporting P-type ATPase (copA), found in Staphylococcus epidermidis (strain ATCC 35984 / DSM 28319 / BCRC 17069 / CCUG 31568 / BM 3577 / RP62A).